Here is a 558-residue protein sequence, read N- to C-terminus: Oxygen-dependent choline dehydrogenase (558 aa).

8 to 37 provides a ligand contact to FAD; the sequence is DYIIIGAGSAGNVLATRLTEDSDVSVLLLE. The active-site Proton acceptor is His-475.

Belongs to the GMC oxidoreductase family. FAD serves as cofactor.

It catalyses the reaction choline + A = betaine aldehyde + AH2. The enzyme catalyses betaine aldehyde + NAD(+) + H2O = glycine betaine + NADH + 2 H(+). The protein operates within amine and polyamine biosynthesis; betaine biosynthesis via choline pathway; betaine aldehyde from choline (cytochrome c reductase route): step 1/1. Involved in the biosynthesis of the osmoprotectant glycine betaine. Catalyzes the oxidation of choline to betaine aldehyde and betaine aldehyde to glycine betaine at the same rate. In Chromohalobacter salexigens (strain ATCC BAA-138 / DSM 3043 / CIP 106854 / NCIMB 13768 / 1H11), this protein is Oxygen-dependent choline dehydrogenase.